A 299-amino-acid chain; its full sequence is Glycine--tRNA ligase alpha subunit (299 aa).

This sequence belongs to the class-II aminoacyl-tRNA synthetase family. Tetramer of two alpha and two beta subunits.

The protein resides in the cytoplasm. It catalyses the reaction tRNA(Gly) + glycine + ATP = glycyl-tRNA(Gly) + AMP + diphosphate. This is Glycine--tRNA ligase alpha subunit from Desulforapulum autotrophicum (strain ATCC 43914 / DSM 3382 / VKM B-1955 / HRM2) (Desulfobacterium autotrophicum).